Consider the following 276-residue polypeptide: MESISWNTPSVRDALAAVKRDAPFVYGLTNYVAANLSANVLLAVGAAPAIGAAADWPARFGAGANALWINTAALMSSGADTLLTAARAASKAGTRWVLDPVALGAGAPEYDAIVRDLLALRPTVIRGNASELIALAGGTAAGKGVDTTASPESALAFIGDLARRSGAVVAVSGPTDYVTDGVATLAVAGGDARLTRVTGAGCALGALIAALLAQRGAALAAASAAHAIYATAAERAADARGTASFAVRFVDELSLLDPAESSRDRSAGQIGAKRRE.

Positions 126 and 172 each coordinate ATP. Residue G199 participates in substrate binding.

This sequence belongs to the Thz kinase family. Mg(2+) is required as a cofactor.

It catalyses the reaction 5-(2-hydroxyethyl)-4-methylthiazole + ATP = 4-methyl-5-(2-phosphooxyethyl)-thiazole + ADP + H(+). Its pathway is cofactor biosynthesis; thiamine diphosphate biosynthesis; 4-methyl-5-(2-phosphoethyl)-thiazole from 5-(2-hydroxyethyl)-4-methylthiazole: step 1/1. Its function is as follows. Catalyzes the phosphorylation of the hydroxyl group of 4-methyl-5-beta-hydroxyethylthiazole (THZ). This chain is Hydroxyethylthiazole kinase, found in Burkholderia pseudomallei (strain 1106a).